Reading from the N-terminus, the 653-residue chain is MKLLWQVTVHHHTWNAILLPFVYLTAQVWILCAAIAAAASAGPQNCPSVCSCSNQFSKVVCTRRGLSEVPQGIPSNTRYLNLMENNIQMIQADTFRHLHHLEVLQLGRNSIRQIEVGAFNGLASLNTLELFDNWLTVIPSGAFEYLSKLRELWLRNNPIESIPSYAFNRVPSLMRLDLGELKKLEYISEGAFEGLFNLKYLNLGMCNIKDMPNLTPLVGLEELEMSGNHFPEIRPGSFHGLSSLKKLWVMNSQVSLIERNAFDGLASLVELNLAHNNLSSLPHDLFTPLRYLVELHLHHNPWNCDCDILWLAWWLREYIPTNSTCCGRCHAPMHMRGRYLVEVDQASFQCSAPFIMDAPRDLNISEGRMAELKCRTPPMSSVKWLLPNGTVLSHASRHPRISVLNDGTLNFSHVLLSDTGVYTCMVTNVAGNSNASAYLNVSTAELNTSNYSFFTTVTVETTEISPEDTTRKYKPVPTTSTGYQPAYTTSTTVLIQTTRVPKQVAVPATDTTDKMQTSLDEVMKTTKIIIGCFVAVTLLAAAMLIVFYKLRKRHQQRSTVTAARTVEIIQVDEDIPAATSAAATAAPSGVSGEGAVVLPTIHDHINYNTYKPAHGAHWTENSLGNSLHPTVTTISEPYIIQTHTKDKVQETQI.

The first 38 residues, 1–38 (MKLLWQVTVHHHTWNAILLPFVYLTAQVWILCAAIAAA), serve as a signal peptide directing secretion. An LRRNT domain is found at 39–75 (ASAGPQNCPSVCSCSNQFSKVVCTRRGLSEVPQGIPS). The Extracellular segment spans residues 39–527 (ASAGPQNCPS…SLDEVMKTTK (489 aa)). Cystine bridges form between Cys46/Cys52 and Cys50/Cys61. LRR repeat units lie at residues 76–97 (NTRY…TFRH), 100–121 (HLEV…AFNG), 124–145 (SLNT…AFEY), 148–169 (KLRE…AFNR), 172–194 (SLMR…AFEG), 197–218 (NLKY…TPLV), 219–240 (GLEE…SFHG), 243–264 (SLKK…AFDG), and 267–288 (SLVE…LFTP). N-linked (GlcNAc...) asparagine glycans are attached at residues Asn277, Asn322, Asn363, Asn388, Asn410, Asn434, Asn440, Asn447, and Asn450. Positions 300–352 (NPWNCDCDILWLAWWLREYIPTNSTCCGRCHAPMHMRGRYLVEVDQASFQCSA) constitute an LRRCT domain. 2 disulfide bridges follow: Cys304–Cys329 and Cys306–Cys350. Residues 353 to 442 (PFIMDAPRDL…SNASAYLNVS (90 aa)) enclose the Ig-like domain. A disulfide bond links Cys374 and Cys424. Residues 528-548 (IIIGCFVAVTLLAAAMLIVFY) form a helical membrane-spanning segment. The Cytoplasmic segment spans residues 549–653 (KLRKRHQQRS…TKDKVQETQI (105 aa)).

As to quaternary structure, interacts with DLG4. Interacts (via LRR repeats) with NTNG2. Forms a complex with DLG4 and with NMDA receptors. In terms of processing, N-glycosylated. Specifically expressed in brain.

It is found in the membrane. The protein localises to the postsynaptic cell membrane. Synaptic adhesion protein. Regulates the formation of exitatory synapses through the recruitment of pre-and-postsynaptic proteins. Organize the lamina/pathway-specific differentiation of dendrites. Plays an important role for auditory synaptic responses. Involved in the suppression of glioma. In Homo sapiens (Human), this protein is Leucine-rich repeat-containing protein 4 (LRRC4).